We begin with the raw amino-acid sequence, 421 residues long: SH2 domain-containing protein 4A (421 aa).

2 positions are modified to phosphoserine: Ser-117 and Ser-123. The tract at residues 132–271 is disordered; that stretch reads DLQAMKKTEP…FLQPLGIPPK (140 aa). Composition is skewed to basic and acidic residues over residues 163–201 and 211–230; these read TRKD…KEDS and KAAD…DYKR. Ser-232 bears the Phosphoserine mark. The 93-residue stretch at 315-407 folds into the SH2 domain; it reads WFHGILTLKK…LGKELLLYPC (93 aa).

In terms of assembly, interacts with ESR1. As to expression, in the kidney, expressed only in the glomerulus. Expressed in T-cells, B-cells, macrophages and dendritic cells (at protein level). In adult, highest levels are found in muscle and lung with lower levels in kidney.

Its subcellular location is the cytoplasm. Its function is as follows. Inhibits estrogen-induced cell proliferation by competing with PLCG for binding to ESR1, blocking the effect of estrogen on PLCG and repressing estrogen-induced proliferation. May play a role in T-cell development and function. The chain is SH2 domain-containing protein 4A (Sh2d4a) from Mus musculus (Mouse).